The following is a 287-amino-acid chain: tRNA selenocysteine 1-associated protein 1 (287 aa).

RRM domains follow at residues 3 to 86 (ASLW…YATY) and 96 to 175 (YSLF…VAIP).

It belongs to the RRM TRSPAP family. Component of the tRNA(Sec) complex composed at least of EEFSEC, SECISBP2, SEPHS1, SEPSECS, TRNAU1AP and tRNA(Sec). Found in a complex with tRNA(Sec). Interacts with SEPSECS. Associates with mRNP and/or polysomes. Found in a complex with EEFSEC, SECISBP2, TRNAU1AP and tRNA(Sec).

It is found in the nucleus. The protein resides in the cytoplasm. In terms of biological role, involved in the early steps of selenocysteine biosynthesis and tRNA(Sec) charging to the later steps resulting in the cotranslational incorporation of selenocysteine into selenoproteins. Stabilizes the SECISBP2, EEFSEC and tRNA(Sec) complex. May be involved in the methylation of tRNA(Sec). Enhances efficiency of selenoproteins synthesis. This chain is tRNA selenocysteine 1-associated protein 1 (TRNAU1AP), found in Bos taurus (Bovine).